The chain runs to 429 residues: Gamma-glutamyl phosphate reductase (429 aa).

It belongs to the gamma-glutamyl phosphate reductase family.

It is found in the cytoplasm. It catalyses the reaction L-glutamate 5-semialdehyde + phosphate + NADP(+) = L-glutamyl 5-phosphate + NADPH + H(+). The protein operates within amino-acid biosynthesis; L-proline biosynthesis; L-glutamate 5-semialdehyde from L-glutamate: step 2/2. In terms of biological role, catalyzes the NADPH-dependent reduction of L-glutamate 5-phosphate into L-glutamate 5-semialdehyde and phosphate. The product spontaneously undergoes cyclization to form 1-pyrroline-5-carboxylate. The polypeptide is Gamma-glutamyl phosphate reductase (Bradyrhizobium sp. (strain BTAi1 / ATCC BAA-1182)).